Reading from the N-terminus, the 186-residue chain is Inner membrane-spanning protein YciB (186 aa).

A run of 6 helical transmembrane segments spans residues 3–23 (FLFD…AGIY), 24–44 (VATT…WFKH), 49–69 (AMQW…LIFH), 76–96 (WKPT…AVLL), 121–141 (LVWS…AYHF), and 149–169 (FKLF…SVWL).

It belongs to the YciB family.

The protein resides in the cell inner membrane. Plays a role in cell envelope biogenesis, maintenance of cell envelope integrity and membrane homeostasis. This chain is Inner membrane-spanning protein YciB, found in Ralstonia nicotianae (strain ATCC BAA-1114 / GMI1000) (Ralstonia solanacearum).